The following is a 172-amino-acid chain: Protein GrpE (172 aa).

The disordered stretch occupies residues methionine 1–leucine 23.

It belongs to the GrpE family. As to quaternary structure, homodimer.

The protein resides in the cytoplasm. Its function is as follows. Participates actively in the response to hyperosmotic and heat shock by preventing the aggregation of stress-denatured proteins, in association with DnaK and GrpE. It is the nucleotide exchange factor for DnaK and may function as a thermosensor. Unfolded proteins bind initially to DnaJ; upon interaction with the DnaJ-bound protein, DnaK hydrolyzes its bound ATP, resulting in the formation of a stable complex. GrpE releases ADP from DnaK; ATP binding to DnaK triggers the release of the substrate protein, thus completing the reaction cycle. Several rounds of ATP-dependent interactions between DnaJ, DnaK and GrpE are required for fully efficient folding. The sequence is that of Protein GrpE from Xylella fastidiosa (strain 9a5c).